The primary structure comprises 89 residues: Co-chaperonin GroES (89 aa).

The protein belongs to the GroES chaperonin family. As to quaternary structure, heptamer of 7 subunits arranged in a ring. Interacts with the chaperonin GroEL.

It localises to the cytoplasm. Together with the chaperonin GroEL, plays an essential role in assisting protein folding. The GroEL-GroES system forms a nano-cage that allows encapsulation of the non-native substrate proteins and provides a physical environment optimized to promote and accelerate protein folding. GroES binds to the apical surface of the GroEL ring, thereby capping the opening of the GroEL channel. The polypeptide is Co-chaperonin GroES (Parabacteroides distasonis (strain ATCC 8503 / DSM 20701 / CIP 104284 / JCM 5825 / NCTC 11152)).